We begin with the raw amino-acid sequence, 1530 residues long: Neurexin-1 (1530 aa).

The signal sequence occupies residues 1–30; sequence MGTALVQHGGCCLLCLSLLLLGCWAELGSG. The Laminin G-like 1 domain occupies 31–217; sequence LEFPGAEGQW…PPNSGGGSPC (187 aa). The Extracellular portion of the chain corresponds to 31 to 1454; the sequence is LEFPGAEGQW…EVIRESSSTT (1424 aa). N-linked (GlcNAc...) asparagine glycosylation is found at N125 and N190. Residues 196–219 are disordered; the sequence is PVDGSEVKLDEEPPNSGGGSPCEA. The EGF-like 1 domain occupies 213 to 255; it reads GGSPCEAGDEGDGGVCLNGGVCSVVDDQAVCDCSRTGFRGKDC. 2 disulfides stabilise this stretch: C228-C243 and C245-C255. Laminin G-like domains lie at 299–496 and 503–695; these read IATF…AFKC and DPIT…KPSC. Ca(2+) contacts are provided by D345, L362, and M430. Cystine bridges form between C460-C496, C666-C695, C703-C714, C708-C723, and C725-C735. Residues 699–736 form the EGF-like 2 domain; it reads TAKPCLSNPCKNNGMCRDGWNRYVCDCSGTGYLGRSCE. 2 Laminin G-like domains span residues 741 to 914 and 928 to 1103; these read VLSY…IDYC and DPVT…ERGC. Residues D788 and L805 each contribute to the Ca(2+) site. N-linked (GlcNAc...) asparagine glycosylation is present at N813. R864 contributes to the Ca(2+) binding site. 5 disulfides stabilise this stretch: C906/C914, C1075/C1103, C1110/C1121, C1115/C1130, and C1132/C1142. Residues 1106 to 1143 form the EGF-like 3 domain; that stretch reads PSTTCQEDSCSNQGVCLQQWDGFSCDCSMTSFSGPLCN. Residues 1149-1347 enclose the Laminin G-like 6 domain; sequence YIFSKGGGQI…DANIAIVGNV (199 aa). Positions 1199 and 1216 each coordinate Ca(2+). N1246 is a glycosylation site (N-linked (GlcNAc...) asparagine). The Ca(2+) site is built by I1298 and N1300. S1408 is a glycosylation site (O-linked (Xyl...) (heparan sulfate) serine). The interval 1412 to 1443 is disordered; the sequence is PSDDEDIDPCEPSSGGLANPTRVGGREPYPGS. Residues 1455–1475 traverse the membrane as a helical segment; that stretch reads GMVVGIVAAAALCILILLYAM. At 1476-1530 the chain is on the cytoplasmic side; sequence YKYRNRDEGSYHVDESRNYISNSAQSNGAVVKEKQPSSAKSANKNKKNKDKEYYV. Residues 1497-1523 are interaction with CASK; it reads NSAQSNGAVVKEKQPSSAKSANKNKKN. The segment at 1497–1530 is disordered; sequence NSAQSNGAVVKEKQPSSAKSANKNKKNKDKEYYV.

It belongs to the neurexin family. As to quaternary structure, interacts (via laminin G-like domain 2 and/or laminin G-like domain 6) with NLGN1 forming a heterotetramer, where one NLGN1 dimer interacts with one NRXN1 dimer. Also interacts (via laminin G-like domain 2 and/or laminin G-like domain 6) with NLGN2, NLGN3 and NLGN4L; interactions with NLGN1, NLGN2, NLGN3 and NLGN4L are calcium-dependent. Interacts (via cytoplasmic C-terminal region) with CASK (via the PDZ, SH3 and guanylate kinase-like domains). Interacts (via cytoplasmic C-terminus) with CASKIN1 and APBA1. Interacts (via laminin G-like domain 2) with NXPH1 and NXPH3. Alpha-type isoforms (neurexin-1-alpha) interact (via laminin G-like domain 2 and/or laminin G-like domain 6) with DAG1 (via alpha-dystroglycan chain). Interacts with LRRTM1, LRRTM2, LRRTM3 and LRRTM4. Interacts with SYT13 and SYTL1. Interacts with CBLN1, CBLN2 and, less avidly, with CBLN4. Interacts with CLSTN3. Alpha-type isoforms interact with alpha-latrotoxin from spider venom. In terms of processing, O-glycosylated; contains heparan sulfate. Heparan sulfate attachment is required for synapse development by mediating interactions with neuroligins and LRRTM2. Brain (neuronal synapse).

It localises to the presynaptic cell membrane. Its function is as follows. Cell surface protein involved in cell-cell-interactions, exocytosis of secretory granules and regulation of signal transmission. Function is isoform-specific. Alpha-type isoforms have a long N-terminus with six laminin G-like domains and play an important role in synaptic signal transmission. Alpha-type isoforms play a role in the regulation of calcium channel activity and Ca(2+)-triggered neurotransmitter release at synapses and at neuromuscular junctions. They play an important role in Ca(2+)-triggered exocytosis of secretory granules in pituitary gland. They may affect their functions at synapses and in endocrine cells via their interactions with proteins from the exocytotic machinery. Likewise, alpha-type isoforms play a role in regulating the activity of postsynaptic NMDA receptors, a subtype of glutamate-gated ion channels. Both alpha-type and beta-type isoforms may play a role in the formation or maintenance of synaptic junctions via their interactions (via the extracellular domains) with neuroligin family members, CBLN1 or CBLN2. In vitro, triggers the de novo formation of presynaptic structures. May be involved in specification of excitatory synapses. Alpha-type isoforms were first identified as receptors for alpha-latrotoxin from spider venom. This Rattus norvegicus (Rat) protein is Neurexin-1 (Nrxn1).